The sequence spans 138 residues: Acidic phospholipase A2 MVL-PLA2 (138 aa).

A signal peptide spans 1–16; sequence MRTLWIVAVCLMGVEG. Disulfide bonds link C42–C131, C44–C60, C59–C111, C65–C138, C66–C104, C73–C97, and C91–C102. Y43, G45, and G47 together coordinate Ca(2+). The active site involves H63. D64 serves as a coordination point for Ca(2+). Residues 86 to 88 carry the May inhibit integrin function (Atypical cell attachment site) motif; sequence NGD. D105 is an active-site residue.

This sequence belongs to the phospholipase A2 family. Group II subfamily. D49 sub-subfamily. Requires Ca(2+) as cofactor. As to expression, expressed by the venom gland.

It localises to the secreted. It carries out the reaction a 1,2-diacyl-sn-glycero-3-phosphocholine + H2O = a 1-acyl-sn-glycero-3-phosphocholine + a fatty acid + H(+). Its function is as follows. Snake venom phospholipase A2 (PLA2) that displays an inhibitory effect, independent from its catalytic activity, on tumor cell adhesion and migration. This effect is mediated via specific inhibition of integrins alpha-5/beta-1 (ITGA5/ITGB1), alpha-v/beta-3 (ITGAV/ITGB3) and alpha-v/beta-6 (ITGAV/ITGB6). PLA2 catalyzes the calcium-dependent hydrolysis of the 2-acyl groups in 3-sn-phosphoglycerides. This chain is Acidic phospholipase A2 MVL-PLA2, found in Macrovipera lebetina transmediterranea (Blunt-nosed viper).